We begin with the raw amino-acid sequence, 160 residues long: Transcription elongation factor GreA (160 aa).

The stretch at 10–37 forms a coiled coil; sequence TLDGKAKLENELQELKTVKRKEVVERIK.

The protein belongs to the GreA/GreB family.

Its function is as follows. Necessary for efficient RNA polymerase transcription elongation past template-encoded arresting sites. The arresting sites in DNA have the property of trapping a certain fraction of elongating RNA polymerases that pass through, resulting in locked ternary complexes. Cleavage of the nascent transcript by cleavage factors such as GreA or GreB allows the resumption of elongation from the new 3'terminus. GreA releases sequences of 2 to 3 nucleotides. This Listeria innocua serovar 6a (strain ATCC BAA-680 / CLIP 11262) protein is Transcription elongation factor GreA.